Reading from the N-terminus, the 126-residue chain is Protein ApaG (126 aa).

An ApaG domain is found at 2 to 126 (DVIQPCIKIQ…FRLAIPNVLN (125 aa)).

The chain is Protein ApaG from Vibrio campbellii (strain ATCC BAA-1116).